The chain runs to 124 residues: Large ribosomal subunit protein bL20 (124 aa).

Belongs to the bacterial ribosomal protein bL20 family.

Functionally, binds directly to 23S ribosomal RNA and is necessary for the in vitro assembly process of the 50S ribosomal subunit. It is not involved in the protein synthesizing functions of that subunit. This is Large ribosomal subunit protein bL20 from Gemmatimonas aurantiaca (strain DSM 14586 / JCM 11422 / NBRC 100505 / T-27).